Here is a 341-residue protein sequence, read N- to C-terminus: tRNA N6-adenosine threonylcarbamoyltransferase (341 aa).

2 residues coordinate Fe cation: histidine 111 and histidine 115. Residues 134–138, aspartate 167, glycine 180, and asparagine 276 contribute to the substrate site; that span reads LVSGG. Position 304 (aspartate 304) interacts with Fe cation.

This sequence belongs to the KAE1 / TsaD family. Fe(2+) serves as cofactor.

It is found in the cytoplasm. It carries out the reaction L-threonylcarbamoyladenylate + adenosine(37) in tRNA = N(6)-L-threonylcarbamoyladenosine(37) in tRNA + AMP + H(+). Required for the formation of a threonylcarbamoyl group on adenosine at position 37 (t(6)A37) in tRNAs that read codons beginning with adenine. Is involved in the transfer of the threonylcarbamoyl moiety of threonylcarbamoyl-AMP (TC-AMP) to the N6 group of A37, together with TsaE and TsaB. TsaD likely plays a direct catalytic role in this reaction. The protein is tRNA N6-adenosine threonylcarbamoyltransferase of Stutzerimonas stutzeri (strain A1501) (Pseudomonas stutzeri).